Consider the following 304-residue polypeptide: Nucleotide-binding protein ROP_69550 (304 aa).

Residue 24–31 (GLSGAGLQ) coordinates ATP. Residue 75-78 (DVRS) participates in GTP binding.

Belongs to the RapZ-like family.

Functionally, displays ATPase and GTPase activities. This Rhodococcus opacus (strain B4) protein is Nucleotide-binding protein ROP_69550.